A 384-amino-acid polypeptide reads, in one-letter code: Beta-ureidopropionase (384 aa).

The 273-residue stretch at 72-344 (VHVGLVQNRI…DGLLVAKLDL (273 aa)) folds into the CN hydrolase domain. E119 (proton acceptor) is an active-site residue. K196 functions as the Proton donor in the catalytic mechanism. The Nucleophile role is filled by C233. S378 is subject to Phosphoserine.

This sequence belongs to the carbon-nitrogen hydrolase superfamily. BUP family. In terms of assembly, homodimer, homotetramer, homooctamer; can also form higher homooligomers. In terms of tissue distribution, detected in liver (at protein level).

It is found in the cytoplasm. It catalyses the reaction 3-(carbamoylamino)propanoate + H2O + 2 H(+) = beta-alanine + NH4(+) + CO2. The enzyme catalyses 3-(carbamoylamino)-2-methylpropanoate + H2O + 2 H(+) = (R)-3-amino-2-methylpropanoate + NH4(+) + CO2. Its pathway is amino-acid biosynthesis; beta-alanine biosynthesis. Its activity is regulated as follows. Strongly inhibited by 50 mM Zn(2+). Not inhibited by EDTA. Competitively inhibited by beta-alanine, 5-aminolevulinic acid (ALA), beta-aminoisobutyrate and 4-ureidobutyrate. In terms of biological role, catalyzes a late step in pyrimidine degradation. Converts N-carbamoyl-beta-alanine (3-ureidopropanoate) into beta-alanine, ammonia and carbon dioxide. Likewise, converts N-carbamoyl-beta-aminoisobutyrate (3-ureidoisobutyrate) into beta-aminoisobutyrate, ammonia and carbon dioxide. This chain is Beta-ureidopropionase (UPB1), found in Homo sapiens (Human).